Here is a 380-residue protein sequence, read N- to C-terminus: Opsin-2 (380 aa).

Topologically, residues 1 to 51 (MVNTTDFYPVPAAMAYESSVGLPLLGWNVPTEHLDLVHPHWRSFQVPNKYW) are extracellular. The N-linked (GlcNAc...) asparagine glycan is linked to Asn-3. Residues 52–76 (HFGLAFVYFMLMCMSSLGNGIVLWI) form a helical membrane-spanning segment. Residues 77-88 (YATTKSIRTPSN) lie on the Cytoplasmic side of the membrane. Residues 89 to 115 (MFIVNLALFDVLMLLEMPMLVVSSLFY) traverse the membrane as a helical segment. At 116 to 128 (QRPVGWELGCDIY) the chain is on the extracellular side. Cysteines 125 and 202 form a disulfide. A helical membrane pass occupies residues 129–148 (AALGSVAGIGSAINNAAIAF). The Cytoplasmic portion of the chain corresponds to 149-166 (DRYRTISCPIDGRLTQGQ). Residues 167-191 (VLALIAGTWVWTLPFTLMPLLRIWS) form a helical membrane-spanning segment. The Extracellular portion of the chain corresponds to 192-215 (RFTAEGFLTTCSFDYLTDDEDTKV). Residues 216–243 (FVGCIFAWSYAFPLCLICCFYYRLIGAV) form a helical membrane-spanning segment. Topologically, residues 244-279 (REHEKMLRDQAKKMNVKSLQSNADTEAQSAEIRIAK) are cytoplasmic. The helical transmembrane segment at 280–303 (VALTIFFLFLCSWTPYAVVAMIGA) threads the bilayer. At 304–311 (FGNRAALT) the chain is on the extracellular side. A helical transmembrane segment spans residues 312 to 336 (PLSTMIPAVTAKIVSCIDPWVYAIN). Lys-323 is subject to N6-(retinylidene)lysine. The Cytoplasmic segment spans residues 337–380 (HPRFRAEVQKRMKWLHLGEDARSSKSDTSSTATDRTVGNVSASA). A disordered region spans residues 358 to 380 (RSSKSDTSSTATDRTVGNVSASA). The segment covering 362–372 (SDTSSTATDRT) has biased composition (low complexity).

The protein belongs to the G-protein coupled receptor 1 family. Opsin subfamily. Post-translationally, phosphorylated on some or all of the serine and threonine residues present in the C-terminal region.

It localises to the membrane. In terms of biological role, visual pigments are the light-absorbing molecules that mediate vision. They consist of an apoprotein, opsin, covalently linked to cis-retinal. In Schistocerca gregaria (Desert locust), this protein is Opsin-2 (Lo2).